A 382-amino-acid chain; its full sequence is Dual-specificity RNA methyltransferase RlmN (382 aa).

Glu-95 (proton acceptor) is an active-site residue. The Radical SAM core domain occupies 101-349 (EETRGTLCVS…TTVRKTRGDD (249 aa)). Cys-108 and Cys-354 are joined by a disulfide. [4Fe-4S] cluster-binding residues include Cys-115, Cys-119, and Cys-122. S-adenosyl-L-methionine-binding positions include 180–181 (GE), Ser-212, 234–236 (SLH), and Asn-311. Cys-354 (S-methylcysteine intermediate) is an active-site residue.

The protein belongs to the radical SAM superfamily. RlmN family. [4Fe-4S] cluster serves as cofactor.

The protein resides in the cytoplasm. It catalyses the reaction adenosine(2503) in 23S rRNA + 2 reduced [2Fe-2S]-[ferredoxin] + 2 S-adenosyl-L-methionine = 2-methyladenosine(2503) in 23S rRNA + 5'-deoxyadenosine + L-methionine + 2 oxidized [2Fe-2S]-[ferredoxin] + S-adenosyl-L-homocysteine. It carries out the reaction adenosine(37) in tRNA + 2 reduced [2Fe-2S]-[ferredoxin] + 2 S-adenosyl-L-methionine = 2-methyladenosine(37) in tRNA + 5'-deoxyadenosine + L-methionine + 2 oxidized [2Fe-2S]-[ferredoxin] + S-adenosyl-L-homocysteine. In terms of biological role, specifically methylates position 2 of adenine 2503 in 23S rRNA and position 2 of adenine 37 in tRNAs. m2A2503 modification seems to play a crucial role in the proofreading step occurring at the peptidyl transferase center and thus would serve to optimize ribosomal fidelity. The sequence is that of Dual-specificity RNA methyltransferase RlmN from Paraburkholderia phymatum (strain DSM 17167 / CIP 108236 / LMG 21445 / STM815) (Burkholderia phymatum).